We begin with the raw amino-acid sequence, 576 residues long: Dihydroxy-acid dehydratase (576 aa).

Residue cysteine 56 coordinates [2Fe-2S] cluster. Aspartate 88 contributes to the Mg(2+) binding site. Cysteine 129 contributes to the [2Fe-2S] cluster binding site. 2 residues coordinate Mg(2+): aspartate 130 and lysine 131. At lysine 131 the chain carries N6-carboxylysine. [2Fe-2S] cluster is bound at residue cysteine 201. Residue glutamate 453 participates in Mg(2+) binding. Serine 479 functions as the Proton acceptor in the catalytic mechanism.

Belongs to the IlvD/Edd family. Homodimer. It depends on [2Fe-2S] cluster as a cofactor. Mg(2+) is required as a cofactor.

It catalyses the reaction (2R)-2,3-dihydroxy-3-methylbutanoate = 3-methyl-2-oxobutanoate + H2O. The catalysed reaction is (2R,3R)-2,3-dihydroxy-3-methylpentanoate = (S)-3-methyl-2-oxopentanoate + H2O. Its pathway is amino-acid biosynthesis; L-isoleucine biosynthesis; L-isoleucine from 2-oxobutanoate: step 3/4. It participates in amino-acid biosynthesis; L-valine biosynthesis; L-valine from pyruvate: step 3/4. Its function is as follows. Functions in the biosynthesis of branched-chain amino acids. Catalyzes the dehydration of (2R,3R)-2,3-dihydroxy-3-methylpentanoate (2,3-dihydroxy-3-methylvalerate) into 2-oxo-3-methylpentanoate (2-oxo-3-methylvalerate) and of (2R)-2,3-dihydroxy-3-methylbutanoate (2,3-dihydroxyisovalerate) into 2-oxo-3-methylbutanoate (2-oxoisovalerate), the penultimate precursor to L-isoleucine and L-valine, respectively. The sequence is that of Dihydroxy-acid dehydratase from Parvibaculum lavamentivorans (strain DS-1 / DSM 13023 / NCIMB 13966).